The primary structure comprises 419 residues: Tyrosine--tRNA ligase (419 aa).

An L-tyrosine-binding site is contributed by Tyr-34. A 'HIGH' region motif is present at residues 39-48 (PSGDSMHIGH). Tyr-168 and Gln-172 together coordinate L-tyrosine. The short motif at 230–234 (KFGKS) is the 'KMSKS' region element. Lys-233 provides a ligand contact to ATP. One can recognise an S4 RNA-binding domain in the interval 352–418 (ANLVDWLVTL…GKKKYFLVSY (67 aa)).

It belongs to the class-I aminoacyl-tRNA synthetase family. TyrS type 1 subfamily. Homodimer.

It is found in the cytoplasm. It catalyses the reaction tRNA(Tyr) + L-tyrosine + ATP = L-tyrosyl-tRNA(Tyr) + AMP + diphosphate + H(+). Its function is as follows. Catalyzes the attachment of tyrosine to tRNA(Tyr) in a two-step reaction: tyrosine is first activated by ATP to form Tyr-AMP and then transferred to the acceptor end of tRNA(Tyr). The sequence is that of Tyrosine--tRNA ligase from Listeria monocytogenes serotype 4a (strain HCC23).